Reading from the N-terminus, the 146-residue chain is Putative pre-16S rRNA nuclease (146 aa).

This sequence belongs to the YqgF nuclease family.

It is found in the cytoplasm. In terms of biological role, could be a nuclease involved in processing of the 5'-end of pre-16S rRNA. The protein is Putative pre-16S rRNA nuclease of Paraburkholderia xenovorans (strain LB400).